We begin with the raw amino-acid sequence, 628 residues long: tRNA uridine 5-carboxymethylaminomethyl modification enzyme MnmG (628 aa).

FAD contacts are provided by residues 11-16 (GAGHAG), valine 123, and serine 178. 271 to 285 (GPRYCPSIETKIVTF) contacts NAD(+). Residue glutamine 368 participates in FAD binding.

This sequence belongs to the MnmG family. As to quaternary structure, homodimer. Heterotetramer of two MnmE and two MnmG subunits. Requires FAD as cofactor.

Its subcellular location is the cytoplasm. NAD-binding protein involved in the addition of a carboxymethylaminomethyl (cmnm) group at the wobble position (U34) of certain tRNAs, forming tRNA-cmnm(5)s(2)U34. This Bacteroides thetaiotaomicron (strain ATCC 29148 / DSM 2079 / JCM 5827 / CCUG 10774 / NCTC 10582 / VPI-5482 / E50) protein is tRNA uridine 5-carboxymethylaminomethyl modification enzyme MnmG.